Here is a 308-residue protein sequence, read N- to C-terminus: Uricase-2 (308 aa).

Active-site charge relay system residues include Lys17 and Thr63. Urate-binding residues include Thr63, Asp64, Phe165, Arg182, Val237, Gln238, and Asn264. The Charge relay system role is filled by His266. The Microbody targeting signal motif lies at 306-308 (SKL).

The protein belongs to the uricase family. In terms of assembly, homotetramer. In terms of tissue distribution, expressed predominantly in the uninfected cells of the central tissue of the root nodule. Also expressed in the nodule parenchyma cells and vascular tissue, in the roots, stems and leaves of uninfected adult plants, and in the cotyledons, roots and hypocotyls of developing seedlings. Localized to the metaxylem parenchyma cells and phloem fibers of developing roots.

The protein localises to the peroxisome. The catalysed reaction is urate + O2 + H2O = 5-hydroxyisourate + H2O2. It participates in purine metabolism; urate degradation; (S)-allantoin from urate: step 1/3. In terms of biological role, catalyzes the oxidation of uric acid to 5-hydroxyisourate, which is further processed to form (S)-allantoin. The sequence is that of Uricase-2 (URIII) from Phaseolus vulgaris (Kidney bean).